The following is a 423-amino-acid chain: 3-phosphoshikimate 1-carboxyvinyltransferase (423 aa).

Residues Lys28, Ser29, and Arg33 each coordinate 3-phosphoshikimate. Residue Lys28 coordinates phosphoenolpyruvate. Phosphoenolpyruvate-binding residues include Gly96 and Arg124. 6 residues coordinate 3-phosphoshikimate: Ser169, Ser170, Gln171, Ser198, Glu312, and His339. Gln171 provides a ligand contact to phosphoenolpyruvate. Glu312 serves as the catalytic Proton acceptor. Phosphoenolpyruvate contacts are provided by Arg343, Arg384, and Lys409.

This sequence belongs to the EPSP synthase family. Monomer.

The protein localises to the cytoplasm. It catalyses the reaction 3-phosphoshikimate + phosphoenolpyruvate = 5-O-(1-carboxyvinyl)-3-phosphoshikimate + phosphate. It functions in the pathway metabolic intermediate biosynthesis; chorismate biosynthesis; chorismate from D-erythrose 4-phosphate and phosphoenolpyruvate: step 6/7. Its function is as follows. Catalyzes the transfer of the enolpyruvyl moiety of phosphoenolpyruvate (PEP) to the 5-hydroxyl of shikimate-3-phosphate (S3P) to produce enolpyruvyl shikimate-3-phosphate and inorganic phosphate. The sequence is that of 3-phosphoshikimate 1-carboxyvinyltransferase from Acidothermus cellulolyticus (strain ATCC 43068 / DSM 8971 / 11B).